Here is a 599-residue protein sequence, read N- to C-terminus: CAP-Gly domain-containing linker protein 4 (599 aa).

3 ANK repeats span residues 65–101, 149–180, and 186–215; these read TSVSELFAILRQWVPQVQQNIDIIGNEILKRGCNVND, TNMNALHYASYFDVPELIRVLLKTSKPKDVDA, and NFGTALHIAAHNLCAGAVKTLLELGANPAF. The region spanning 303-345 is the CAP-Gly 1 domain; it reads GTTEFASGQWAGIELDEPEGKNNGSVGRVQYFKCAPKYGIFAP. A disordered region spans residues 387-482; that stretch reads SGLMTSKKEN…TSAANNTHRE (96 aa). The span at 443 to 462 shows a compositional bias: low complexity; the sequence is LSTSSSSGKKTLSKSPSLPS. Positions 468 to 478 are enriched in polar residues; it reads LKSSTTSAANN. Positions 505–547 constitute a CAP-Gly 2 domain; sequence GTTNFAPGYWYGIELEKPHGKNDGSVGGVQYFSCSPRYGIFAP. Ser557 carries the phosphoserine modification. A disordered region spans residues 565–599; that stretch reads SSNKQNHSYPGFRRSFSTTSASSQKEINRRNAFAK. Residues 576–587 are compositionally biased toward low complexity; sequence FRRSFSTTSASS.

This is CAP-Gly domain-containing linker protein 4 (Clip4) from Rattus norvegicus (Rat).